Here is a 78-residue protein sequence, read N- to C-terminus: Cytochrome c oxidase subunit 8, mitochondrial (78 aa).

The N-terminal 27 residues, 1-27, are a transit peptide targeting the mitochondrion; it reads MLCQQMIRTTAKRSSNIMTRPIIMKRS. Residues 28-51 lie on the Mitochondrial matrix side of the membrane; it reads VHFKDGVYENIPFKVKGRKTPYAL. A helical membrane pass occupies residues 52–73; sequence SHFGFFAIGFAVPFVACYVQLK. K74 is a topological domain (mitochondrial intermembrane). Residues 75–78 constitute a propeptide that is removed on maturation; sequence SGAF.

This sequence belongs to the cytochrome c oxidase VIIc family. As to quaternary structure, component of the cytochrome c oxidase (complex IV, CIV), a multisubunit enzyme composed of 12 subunits. The complex is composed of a catalytic core of 3 subunits COX1, COX2 and COX3, encoded in the mitochondrial DNA, and 9 supernumerary subunits COX4, COX5A (or COX5B), COX6, COX7, COX8, COX9, COX12, COX13 and COX26, which are encoded in the nuclear genome. The complex exists as a monomer or a dimer and forms supercomplexes (SCs) in the inner mitochondrial membrane with a dimer of ubiquinol-cytochrome c oxidoreductase (cytochrome b-c1 complex, complex III, CIII), resulting in 2 different assemblies (supercomplexes III(2)IV and III(2)IV(2)).

It is found in the mitochondrion inner membrane. It functions in the pathway energy metabolism; oxidative phosphorylation. Its function is as follows. Component of the cytochrome c oxidase, the last enzyme in the mitochondrial electron transport chain which drives oxidative phosphorylation. The respiratory chain contains 3 multisubunit complexes succinate dehydrogenase (complex II, CII), ubiquinol-cytochrome c oxidoreductase (cytochrome b-c1 complex, complex III, CIII) and cytochrome c oxidase (complex IV, CIV), that cooperate to transfer electrons derived from NADH and succinate to molecular oxygen, creating an electrochemical gradient over the inner membrane that drives transmembrane transport and the ATP synthase. Cytochrome c oxidase is the component of the respiratory chain that catalyzes the reduction of oxygen to water. Electrons originating from reduced cytochrome c in the intermembrane space (IMS) are transferred via the dinuclear copper A center (CU(A)) of COX2 and heme A of COX1 to the active site in COX1, a binuclear center (BNC) formed by heme A3 and copper B (CU(B)). The BNC reduces molecular oxygen to 2 water molecules using 4 electrons from cytochrome c in the IMS and 4 protons from the mitochondrial matrix. The sequence is that of Cytochrome c oxidase subunit 8, mitochondrial (COX8) from Saccharomyces cerevisiae (strain ATCC 204508 / S288c) (Baker's yeast).